Consider the following 362-residue polypeptide: S-adenosylmethionine-dependent nucleotide dehydratase RSAD2 (362 aa).

A disordered region spans residues 47–73; sequence EQPQVRGEPEDTQETQEDGNSTQPTTP. A compositionally biased stretch (polar residues) spans 64–73; it reads DGNSTQPTTP. The Radical SAM core domain occupies 70–290; sequence PTTPVSVNYH…LERHKEVSCL (221 aa). Cys-84, Cys-88, and Cys-91 together coordinate [4Fe-4S] cluster. Residue Lys-198 is modified to N6-acetyllysine. Lys-207 is covalently cross-linked (Glycyl lysine isopeptide (Lys-Gly) (interchain with G-Cter in ubiquitin)).

It belongs to the radical SAM superfamily. RSAD2 family. Homodimer. Interacts with IRAK1 and TRAF6. Interacts with FPPS. Interacts with HADHB. Interacts (via C-terminus) with VAPA/VAP33 (via C-terminus). It depends on [4Fe-4S] cluster as a cofactor. Post-translationally, acetylated by HAT1. HAT1-mediated acetylation of Lys-198 in turn recruits UBE4A that stimulates RSAD2 polyubiquitination leading to proteasomal degradation. 'Lys-6'-linked polyubiquitination at Lys-207 leads to RSAD2 protein degradation. In terms of tissue distribution, expressed at higher levels in atherosclerotic arteries than in normal arteries.

Its subcellular location is the endoplasmic reticulum membrane. The protein localises to the golgi apparatus. It is found in the endoplasmic reticulum. It localises to the lipid droplet. The protein resides in the mitochondrion. Its subcellular location is the mitochondrion inner membrane. The protein localises to the mitochondrion outer membrane. The catalysed reaction is CTP + AH2 + S-adenosyl-L-methionine = 3'-deoxy-3',4'-didehydro-CTP + 5'-deoxyadenosine + L-methionine + A + H2O + H(+). With respect to regulation, IRAK1 and TRAF6 synergistically activate RSAD2 increasing its activity with CTP as substrate about 10-fold. Its function is as follows. Interferon-inducible antiviral protein which plays a major role in the cell antiviral state induced by type I and type II interferon. Catalyzes the conversion of cytidine triphosphate (CTP) to 3'-deoxy-3',4'-didehydro-CTP (ddhCTP) via a SAM-dependent radical mechanism. In turn, ddhCTP acts as a chain terminator for the RNA-dependent RNA polymerases from multiple viruses and directly inhibits viral replication. Therefore, inhibits a wide range of DNA and RNA viruses. Also promotes TLR7 and TLR9-dependent production of IFN-beta production in plasmacytoid dendritic cells (pDCs) by facilitating 'Lys-63'-linked ubiquitination of IRAK1 by TRAF6. Plays a role in CD4+ T-cells activation and differentiation. Facilitates T-cell receptor (TCR)-mediated GATA3 activation and optimal T-helper 2 (Th2) cytokine production by modulating NFKB1 and JUNB activities. Can inhibit secretion of soluble proteins. The protein is S-adenosylmethionine-dependent nucleotide dehydratase RSAD2 of Mus musculus (Mouse).